A 120-amino-acid polypeptide reads, in one-letter code: Spermidine export protein MdtJ (120 aa).

The next 4 membrane-spanning stretches (helical) occupy residues 1-21 (MFYWILLALAIVAEITGTLSM), 31-51 (TGFILMLVMISLSYIFLSFAV), 54-74 (IALGVAYALWEGIGILLITLF), and 81-101 (EALSTMKIAGLATLVVGIVLI).

It belongs to the drug/metabolite transporter (DMT) superfamily. Small multidrug resistance (SMR) (TC 2.A.7.1) family. MdtJ subfamily. In terms of assembly, forms a complex with MdtI.

It localises to the cell inner membrane. Its function is as follows. Catalyzes the excretion of spermidine. The sequence is that of Spermidine export protein MdtJ from Enterobacter sp. (strain 638).